Consider the following 79-residue polypeptide: Putative membrane protein insertion efficiency factor (79 aa).

Belongs to the UPF0161 family.

Its subcellular location is the cell inner membrane. In terms of biological role, could be involved in insertion of integral membrane proteins into the membrane. This is Putative membrane protein insertion efficiency factor from Synechocystis sp. (strain ATCC 27184 / PCC 6803 / Kazusa).